Reading from the N-terminus, the 192-residue chain is Ion-translocating oxidoreductase complex subunit A (192 aa).

6 helical membrane-spanning segments follow: residues 5–25, 39–59, 65–85, 102–122, 134–154, and 171–191; these read LLLLIGTVLVNNFVLVKFLGL, IGMSMATTFVLTLASILSYLV, LPFDLGYLRTMSFILVIAVVV, ALGIYLPLITTNCAVLGVALL, AIFGFGAAVGFSLVLILFSAM, and AIAMVTAGLMSLAFMGFTGLV.

The protein belongs to the NqrDE/RnfAE family. In terms of assembly, the complex is composed of six subunits: RnfA, RnfB, RnfC, RnfD, RnfE and RnfG.

Its subcellular location is the cell inner membrane. Functionally, part of a membrane-bound complex that couples electron transfer with translocation of ions across the membrane. This chain is Ion-translocating oxidoreductase complex subunit A, found in Shewanella pealeana (strain ATCC 700345 / ANG-SQ1).